The primary structure comprises 169 residues: uncharacterized protein (169 aa).

2 helical membrane passes run 62-84 (RWGF…LLGL) and 94-116 (ALML…YWWF).

The protein resides in the cell membrane. This is an uncharacterized protein from Archaeoglobus fulgidus (strain ATCC 49558 / DSM 4304 / JCM 9628 / NBRC 100126 / VC-16).